The sequence spans 615 residues: Dihydroxy-acid dehydratase (615 aa).

Asp81 serves as a coordination point for Mg(2+). Cys122 provides a ligand contact to [2Fe-2S] cluster. Residues Asp123 and Lys124 each coordinate Mg(2+). Residue Lys124 is modified to N6-carboxylysine. Residue Cys197 participates in [2Fe-2S] cluster binding. Glu494 is a binding site for Mg(2+). Ser520 acts as the Proton acceptor in catalysis.

The protein belongs to the IlvD/Edd family. In terms of assembly, homodimer. [2Fe-2S] cluster is required as a cofactor. Mg(2+) serves as cofactor.

The enzyme catalyses (2R)-2,3-dihydroxy-3-methylbutanoate = 3-methyl-2-oxobutanoate + H2O. It catalyses the reaction (2R,3R)-2,3-dihydroxy-3-methylpentanoate = (S)-3-methyl-2-oxopentanoate + H2O. Its pathway is amino-acid biosynthesis; L-isoleucine biosynthesis; L-isoleucine from 2-oxobutanoate: step 3/4. It participates in amino-acid biosynthesis; L-valine biosynthesis; L-valine from pyruvate: step 3/4. Functions in the biosynthesis of branched-chain amino acids. Catalyzes the dehydration of (2R,3R)-2,3-dihydroxy-3-methylpentanoate (2,3-dihydroxy-3-methylvalerate) into 2-oxo-3-methylpentanoate (2-oxo-3-methylvalerate) and of (2R)-2,3-dihydroxy-3-methylbutanoate (2,3-dihydroxyisovalerate) into 2-oxo-3-methylbutanoate (2-oxoisovalerate), the penultimate precursor to L-isoleucine and L-valine, respectively. This Salinispora arenicola (strain CNS-205) protein is Dihydroxy-acid dehydratase.